A 473-amino-acid polypeptide reads, in one-letter code: Flavin-dependent L-tryptophan oxidase RebO (473 aa).

Residues 1–21 (MSRGHKKITVLGAGVAGLVAA) form the signal peptide. Residues 15-16 (VA), 35-36 (EG), Arg43, 61-64 (GAMR), Glu444, and 451-456 (AWIDGA) each bind FAD.

The protein belongs to the flavin monoamine oxidase family. RebO subfamily. In terms of assembly, homodimer. The cofactor is FAD.

It catalyses the reaction 7-chloro-L-tryptophan + O2 = 3-(7-chloroindol-3-yl)-2-iminopropanoate + H2O2. It carries out the reaction L-tryptophan + O2 = 2-iminio-3-(indol-3-yl)propanoate + H2O2. In terms of biological role, involved in the biosynthesis of the indolocarbazole antitumor agent rebeccamycin. It generates the imine form of 7-chloroindole 3-pyruvate (7Cl-IPA) from 7-chloro-L-tryptophan (7Cl-Trp), with concomitant two-electron reduction of O(2) to H(2)O(2). The enzyme is also active with L-tryptophan as substrate. This Lentzea aerocolonigenes (Lechevalieria aerocolonigenes) protein is Flavin-dependent L-tryptophan oxidase RebO (rebO).